A 419-amino-acid chain; its full sequence is O-antigen ligase (419 aa).

Residues methionine 1 to methionine 19 lie on the Cytoplasmic side of the membrane. A helical transmembrane segment spans residues isoleucine 20 to valine 38. The Periplasmic segment spans residues aspartate 39–serine 43. Residues isoleucine 44–arginine 61 form a helical membrane-spanning segment. At glycine 62–asparagine 71 the chain is on the cytoplasmic side. A helical membrane pass occupies residues leucine 72–alanine 91. Topologically, residues phenylalanine 92–leucine 107 are periplasmic. A helical transmembrane segment spans residues asparagine 108 to threonine 125. Over serine 126–serine 134 the chain is Cytoplasmic. Residues valine 135–isoleucine 153 traverse the membrane as a helical segment. Residues asparagine 154–glycine 167 lie on the Periplasmic side of the membrane. The helical transmembrane segment at threonine 168–isoleucine 187 threads the bilayer. At leucine 188–histidine 194 the chain is on the cytoplasmic side. The chain crosses the membrane as a helical span at residues proline 195–leucine 211. Topologically, residues threonine 212–alanine 216 are periplasmic. The chain crosses the membrane as a helical span at residues threonine 217–asparagine 234. Topologically, residues lysine 235–phenylalanine 240 are cytoplasmic. Residues threonine 241–asparagine 259 traverse the membrane as a helical segment. The Periplasmic segment spans residues lysine 260–lysine 348. A helical membrane pass occupies residues glycine 349–alanine 367. The Cytoplasmic segment spans residues tyrosine 368–alanine 372. The helical transmembrane segment at leucine 373–isoleucine 391 threads the bilayer. At isoleucine 392–serine 396 the chain is on the periplasmic side. A helical membrane pass occupies residues isoleucine 397 to asparagine 412. Residues asparagine 413–asparagine 419 lie on the Cytoplasmic side of the membrane.

Homodimer.

The protein localises to the cell inner membrane. It carries out the reaction a lipid-linked O antigen + a lipid A-core oligosaccharide = a lipopolysaccharide + a polyisoprenyl diphosphate.. It functions in the pathway bacterial outer membrane biogenesis; lipopolysaccharide biosynthesis. With respect to regulation, activity does not require ATP and magnesium ions. Transferase involved in the biosynthesis of the lipopolysaccharide (LPS). In vitro, catalyzes the transfer of a polymerized O-antigen molecule from its polyprenyl diphosphate membrane anchor to a terminal sugar of the lipid A-core oligosaccharide, finalizing the biosynthesis of the lipopolysaccharide. The enzyme is functional and can be used to give diverse hybrid O-antigens in vitro, but K12 strains do not produce the O-antigen in vivo due to mutations in the rfb gene cluster. K12 strains are phenotypically rough, their lipopolysaccharide having a complete core structure, but no O-antigen. In highly mucoid K12 strains, WaaL can ligate colanic acid (CA or M-antigen) repeats to a significant proportion of lipopolysaccharide (LPS) core acceptor molecules, forming the LPS glycoform M(LPS). The attachment point was identified as O-7 of the L-glycero-D-manno-heptose of the outer LPS core, the same position used for O-antigen ligation. Cannot catalyze ATP hydrolysis in vitro. In Escherichia coli (strain K12), this protein is O-antigen ligase.